Consider the following 296-residue polypeptide: Glucokinase (296 aa).

This sequence belongs to the ROK (NagC/XylR) family. Homodimer. It depends on a divalent metal cation as a cofactor.

The catalysed reaction is D-glucose + ATP = D-glucose 6-phosphate + ADP + H(+). Functionally, catalyzes the phosphorylation of D-glucose to D-glucose 6-phosphate using ATP as the phosphate donor. Has a broad hexose specificity, and in addition to glucose, which shows the highest catalytic efficiency, it can also phosphorylate fructose, mannose, galactose and sorbitol. Can also use CTP, GTP or UTP as phosphoryl donor. The chain is Glucokinase from Pyrobaculum calidifontis (strain DSM 21063 / JCM 11548 / VA1).